The primary structure comprises 366 residues: Histidinol-phosphate aminotransferase (366 aa).

The residue at position 228 (K228) is an N6-(pyridoxal phosphate)lysine.

It belongs to the class-II pyridoxal-phosphate-dependent aminotransferase family. Histidinol-phosphate aminotransferase subfamily. In terms of assembly, homodimer. It depends on pyridoxal 5'-phosphate as a cofactor.

The enzyme catalyses L-histidinol phosphate + 2-oxoglutarate = 3-(imidazol-4-yl)-2-oxopropyl phosphate + L-glutamate. It participates in amino-acid biosynthesis; L-histidine biosynthesis; L-histidine from 5-phospho-alpha-D-ribose 1-diphosphate: step 7/9. The chain is Histidinol-phosphate aminotransferase from Corynebacterium glutamicum (strain R).